Here is a 285-residue protein sequence, read N- to C-terminus: NADPH-dependent 7-cyano-7-deazaguanine reductase (285 aa).

Residue 91–93 participates in substrate binding; the sequence is IES. 93–94 is a binding site for NADPH; sequence SK. The Thioimide intermediate role is filled by cysteine 193. Aspartate 200 (proton donor) is an active-site residue. 232 to 233 is a binding site for substrate; sequence HE. 261–262 contacts NADPH; it reads RG.

Belongs to the GTP cyclohydrolase I family. QueF type 2 subfamily. Homodimer.

It is found in the cytoplasm. It carries out the reaction 7-aminomethyl-7-carbaguanine + 2 NADP(+) = 7-cyano-7-deazaguanine + 2 NADPH + 3 H(+). Its pathway is tRNA modification; tRNA-queuosine biosynthesis. Its function is as follows. Catalyzes the NADPH-dependent reduction of 7-cyano-7-deazaguanine (preQ0) to 7-aminomethyl-7-deazaguanine (preQ1). The polypeptide is NADPH-dependent 7-cyano-7-deazaguanine reductase (Shewanella baltica (strain OS223)).